Here is a 546-residue protein sequence, read N- to C-terminus: Chaperonin GroEL (546 aa).

ATP-binding positions include 29–32 (TLGP), Lys-50, 86–90 (DGTTT), Gly-415, and Asp-495. The segment at 526-546 (EDNAGGGGMPQGMGGGMPGMM) is disordered. Over residues 529 to 546 (AGGGGMPQGMGGGMPGMM) the composition is skewed to gly residues.

The protein belongs to the chaperonin (HSP60) family. Forms a cylinder of 14 subunits composed of two heptameric rings stacked back-to-back. Interacts with the co-chaperonin GroES.

The protein localises to the cytoplasm. It carries out the reaction ATP + H2O + a folded polypeptide = ADP + phosphate + an unfolded polypeptide.. In terms of biological role, together with its co-chaperonin GroES, plays an essential role in assisting protein folding. The GroEL-GroES system forms a nano-cage that allows encapsulation of the non-native substrate proteins and provides a physical environment optimized to promote and accelerate protein folding. This Christiangramia forsetii (strain DSM 17595 / CGMCC 1.15422 / KT0803) (Gramella forsetii) protein is Chaperonin GroEL.